Consider the following 254-residue polypeptide: Acidic endochitinase (254 aa).

Residues 1-23 (MKFWGSVLALSFVVFLFLTGTLA) form the signal peptide. The active-site Proton donor is glutamate 91. Cysteines 213 and 245 form a disulfide.

This sequence belongs to the glycosyl hydrolase 19 family. Chitinase class II subfamily.

It is found in the secreted. It carries out the reaction Random endo-hydrolysis of N-acetyl-beta-D-glucosaminide (1-&gt;4)-beta-linkages in chitin and chitodextrins.. Defense against chitin-containing fungal pathogens. This Petunia hybrida (Petunia) protein is Acidic endochitinase.